A 367-amino-acid polypeptide reads, in one-letter code: Methylthioribose-1-phosphate isomerase (367 aa).

The active-site Proton donor is Asp-250.

The protein belongs to the eIF-2B alpha/beta/delta subunits family. MtnA subfamily.

The protein localises to the cytoplasm. Its subcellular location is the nucleus. The enzyme catalyses 5-(methylsulfanyl)-alpha-D-ribose 1-phosphate = 5-(methylsulfanyl)-D-ribulose 1-phosphate. Its pathway is amino-acid biosynthesis; L-methionine biosynthesis via salvage pathway; L-methionine from S-methyl-5-thio-alpha-D-ribose 1-phosphate: step 1/6. In terms of biological role, catalyzes the interconversion of methylthioribose-1-phosphate (MTR-1-P) into methylthioribulose-1-phosphate (MTRu-1-P). In Zea mays (Maize), this protein is Methylthioribose-1-phosphate isomerase (IDI2).